The chain runs to 376 residues: Pyruvate dehydrogenase E1 component subunit beta-2, mitochondrial (376 aa).

Residues Met1–Tyr36 constitute a mitochondrion transit peptide. Thiamine diphosphate is bound at residue Glu99. K(+) is bound by residues Ile152, Ala200, Ile201, and Asp203.

As to quaternary structure, tetramer of 2 alpha and 2 beta subunits. Requires thiamine diphosphate as cofactor.

The protein localises to the mitochondrion matrix. It catalyses the reaction N(6)-[(R)-lipoyl]-L-lysyl-[protein] + pyruvate + H(+) = N(6)-[(R)-S(8)-acetyldihydrolipoyl]-L-lysyl-[protein] + CO2. In terms of biological role, the pyruvate dehydrogenase complex catalyzes the overall conversion of pyruvate to acetyl-CoA and CO(2). It contains multiple copies of three enzymatic components: pyruvate dehydrogenase (E1), dihydrolipoamide acetyltransferase (E2) and lipoamide dehydrogenase (E3). The sequence is that of Pyruvate dehydrogenase E1 component subunit beta-2, mitochondrial from Oryza sativa subsp. japonica (Rice).